The sequence spans 271 residues: Urease accessory protein UreD (271 aa).

The protein belongs to the UreD family. As to quaternary structure, ureD, UreF and UreG form a complex that acts as a GTP-hydrolysis-dependent molecular chaperone, activating the urease apoprotein by helping to assemble the nickel containing metallocenter of UreC. The UreE protein probably delivers the nickel.

The protein localises to the cytoplasm. Required for maturation of urease via the functional incorporation of the urease nickel metallocenter. The chain is Urease accessory protein UreD from Mycolicibacterium smegmatis (strain ATCC 700084 / mc(2)155) (Mycobacterium smegmatis).